Reading from the N-terminus, the 853-residue chain is Envelope glycoprotein gp160 (853 aa).

Positions 1–32 are cleaved as a signal peptide; it reads MRVKEKYQHLWRWGWKWGIMLLGILMICSATE. The Extracellular portion of the chain corresponds to 33-682; sequence NLWVTVYYGV…ITNWLWYIKI (650 aa). A disulfide bridge links C54 with C74. 16 N-linked (GlcNAc...) asparagine; by host glycosylation sites follow: N88, N136, N141, N156, N160, N186, N195, N232, N239, N260, N274, N287, N293, N299, N330, and N354. 5 disulfides stabilise this stretch: C119-C203, C126-C194, C131-C157, C216-C245, and C226-C237. Positions 131-156 are V1; the sequence is CTDLKNDTNTNSSNGRMIMEKGEIKN. The segment at 157 to 194 is V2; the sequence is CSFNISTSIRNKVQKEYAFFYKLDIRPIDNTTYRLISC. A V3 region spans residues 294 to 328; sequence CTRPNNNTRKSIRIQRGPGRAFVTIGKIGNMRQAH. C294 and C329 are oxidised to a cystine. The tract at residues 362 to 372 is CD4-binding loop; the sequence is SSGGDPEIVTH. Disulfide bonds link C376-C443 and C383-C416. The interval 383–416 is V4; the sequence is CNSTQLFNSTWFNSTWSTEGSNNTEGSDTITLPC. N-linked (GlcNAc...) asparagine; by host glycans are attached at residues N384, N390, N395, N404, N446, and N461. 2 V5 regions span residues 459–469 and 461–469; these read NTNESEVFRPG and NESEVFRPG. Positions 510–530 are fusion peptide; the sequence is AVGIGALFLGFLGAAGSTMGA. The tract at residues 572–590 is immunosuppression; sequence KQLQARILAVERYLKDQQL. C596 and C602 are disulfide-bonded. N-linked (GlcNAc...) asparagine; by host glycosylation is found at N609, N614, N623, N635, and N672. A coiled-coil region spans residues 631–665; sequence REINNYTSLIHSLIDESQNQQEKNEQELLELDKWA. The tract at residues 660-681 is MPER; binding to GalCer; sequence ELDKWASLWNWFNITNWLWYIK. Residues 683-703 form a helical membrane-spanning segment; the sequence is FIMIVGGLVGLRIVFAVLSIV. Topologically, residues 704-853 are cytoplasmic; it reads NRVRQGYSPL…RIRQGLERIL (150 aa). Positions 710-713 match the YXXL motif; contains endocytosis signal motif; that stretch reads YSPL. The tract at residues 717–741 is disordered; it reads THLPNRGGPDRPEGIEEEGGERDRD. A lipid anchor (S-palmitoyl cysteine; by host) is attached at C762.

Belongs to the HIV-1 env protein family. The mature envelope protein (Env) consists of a homotrimer of non-covalently associated gp120-gp41 heterodimers. The resulting complex protrudes from the virus surface as a spike. There seems to be as few as 10 spikes on the average virion. Interacts with host CD4, CCR5 and CXCR4. Gp120 also interacts with the C-type lectins CD209/DC-SIGN and CLEC4M/DC-SIGNR (collectively referred to as DC-SIGN(R)). Gp120 and gp41 interact with GalCer. Gp120 interacts with host ITGA4/ITGB7 complex; on CD4+ T-cells, this interaction results in rapid activation of integrin ITGAL/LFA-1, which facilitates efficient cell-to-cell spreading of HIV-1. Gp120 interacts with cell-associated heparan sulfate; this interaction increases virus infectivity on permissive cells and may be involved in infection of CD4- cells. As to quaternary structure, the mature envelope protein (Env) consists of a homotrimer of non-covalently associated gp120-gp41 heterodimers. The resulting complex protrudes from the virus surface as a spike. There seems to be as few as 10 spikes on the average virion. In terms of processing, highly glycosylated by host. The high number of glycan on the protein is reffered to as 'glycan shield' because it contributes to hide protein sequence from adaptive immune system. Palmitoylation of the transmembrane protein and of Env polyprotein (prior to its proteolytic cleavage) is essential for their association with host cell membrane lipid rafts. Palmitoylation is therefore required for envelope trafficking to classical lipid rafts, but not for viral replication. Post-translationally, specific enzymatic cleavages in vivo yield mature proteins. Envelope glycoproteins are synthesized as an inactive precursor that is heavily N-glycosylated and processed likely by host cell furin in the Golgi to yield the mature SU and TM proteins. The cleavage site between SU and TM requires the minimal sequence [KR]-X-[KR]-R. About 2 of the 9 disulfide bonds of gp41 are reduced by P4HB/PDI, following binding to CD4 receptor.

Its subcellular location is the virion membrane. The protein localises to the host cell membrane. It localises to the host endosome membrane. In terms of biological role, oligomerizes in the host endoplasmic reticulum into predominantly trimers. In a second time, gp160 transits in the host Golgi, where glycosylation is completed. The precursor is then proteolytically cleaved in the trans-Golgi and thereby activated by cellular furin or furin-like proteases to produce gp120 and gp41. Attaches the virus to the host lymphoid cell by binding to the primary receptor CD4. This interaction induces a structural rearrangement creating a high affinity binding site for a chemokine coreceptor like CXCR4 and/or CCR5. Acts as a ligand for CD209/DC-SIGN and CLEC4M/DC-SIGNR, which are respectively found on dendritic cells (DCs), and on endothelial cells of liver sinusoids and lymph node sinuses. These interactions allow capture of viral particles at mucosal surfaces by these cells and subsequent transmission to permissive cells. HIV subverts the migration properties of dendritic cells to gain access to CD4+ T-cells in lymph nodes. Virus transmission to permissive T-cells occurs either in trans (without DCs infection, through viral capture and transmission), or in cis (following DCs productive infection, through the usual CD4-gp120 interaction), thereby inducing a robust infection. In trans infection, bound virions remain infectious over days and it is proposed that they are not degraded, but protected in non-lysosomal acidic organelles within the DCs close to the cell membrane thus contributing to the viral infectious potential during DCs' migration from the periphery to the lymphoid tissues. On arrival at lymphoid tissues, intact virions recycle back to DCs' cell surface allowing virus transmission to CD4+ T-cells. Its function is as follows. Acts as a class I viral fusion protein. Under the current model, the protein has at least 3 conformational states: pre-fusion native state, pre-hairpin intermediate state, and post-fusion hairpin state. During fusion of viral and target intracellular membranes, the coiled coil regions (heptad repeats) assume a trimer-of-hairpins structure, positioning the fusion peptide in close proximity to the C-terminal region of the ectodomain. The formation of this structure appears to drive apposition and subsequent fusion of viral and target cell membranes. Complete fusion occurs in host cell endosomes and is dynamin-dependent, however some lipid transfer might occur at the plasma membrane. The virus undergoes clathrin-dependent internalization long before endosomal fusion, thus minimizing the surface exposure of conserved viral epitopes during fusion and reducing the efficacy of inhibitors targeting these epitopes. Membranes fusion leads to delivery of the nucleocapsid into the cytoplasm. In Human immunodeficiency virus type 1 group M subtype B (isolate MFA) (HIV-1), this protein is Envelope glycoprotein gp160.